We begin with the raw amino-acid sequence, 149 residues long: Transcriptional regulator MraZ (149 aa).

SpoVT-AbrB domains lie at 6–52 (HAHR…TPPD) and 81–124 (SEEV…DKRE).

Belongs to the MraZ family. As to quaternary structure, forms oligomers.

It is found in the cytoplasm. The protein resides in the nucleoid. The polypeptide is Transcriptional regulator MraZ (Maridesulfovibrio salexigens (strain ATCC 14822 / DSM 2638 / NCIMB 8403 / VKM B-1763) (Desulfovibrio salexigens)).